Reading from the N-terminus, the 886-residue chain is Valine--tRNA ligase (886 aa).

A 'HIGH' region motif is present at residues 53-63 (PNVTGSLHMGH). Positions 540–544 (KMSKS) match the 'KMSKS' region motif. Lys-543 contributes to the ATP binding site. Residues 820–851 (IDVAAERRRMEKDLAAAQKELASTAAKLANAD) are a coiled coil.

The protein belongs to the class-I aminoacyl-tRNA synthetase family. ValS type 1 subfamily. Monomer.

The protein resides in the cytoplasm. It catalyses the reaction tRNA(Val) + L-valine + ATP = L-valyl-tRNA(Val) + AMP + diphosphate. Its function is as follows. Catalyzes the attachment of valine to tRNA(Val). As ValRS can inadvertently accommodate and process structurally similar amino acids such as threonine, to avoid such errors, it has a 'posttransfer' editing activity that hydrolyzes mischarged Thr-tRNA(Val) in a tRNA-dependent manner. The chain is Valine--tRNA ligase from Mycobacterium leprae (strain TN).